Consider the following 342-residue polypeptide: 29 kDa ribonucleoprotein, chloroplastic (342 aa).

Residues 1–65 (MSASASSLSA…PAEYPSRFVR (65 aa)) constitute a chloroplast transit peptide. In terms of domain architecture, RRM 1 spans 99–177 (LKLFVGNLSF…RPLRVNAGPP (79 aa)). Phosphoserine is present on residues Ser-107 and Ser-204. Positions 167 to 255 (GRPLRVNAGP…GSGSGSGSGS (89 aa)) are disordered. The segment at 178 to 256 (PPKREESFSR…SGSGSGSGSG (79 aa)) is linker (Gly-rich). Gly residues-rich tracts occupy residues 190-237 (RSGG…GYGG) and 245-255 (SGSGSGSGSGS). The RRM 2 domain maps to 257 to 335 (NRLYVGNLSW…RQIRVSEAEA (79 aa)).

It localises to the plastid. The protein resides in the chloroplast. In terms of biological role, stabilizes specific chloroplast mRNAs. Required for normal chloroplast development under cold stress conditions by stabilizing transcripts of numerous mRNAs under these conditions. This chain is 29 kDa ribonucleoprotein, chloroplastic, found in Arabidopsis thaliana (Mouse-ear cress).